An 81-amino-acid polypeptide reads, in one-letter code: Conotoxin ArMKLT2-0311 (81 aa).

An N-terminal signal peptide occupies residues methionine 1–alanine 22. Residues aspartate 23–valine 34 are compositionally biased toward basic and acidic residues. The tract at residues aspartate 23 to aspartate 45 is disordered. A propeptide spanning residues aspartate 23–arginine 51 is cleaved from the precursor. 3 disulfide bridges follow: cysteine 52–cysteine 67, cysteine 59–cysteine 71, and cysteine 66–cysteine 80.

This sequence belongs to the conotoxin O1 superfamily. Expressed by the venom duct.

It localises to the secreted. The polypeptide is Conotoxin ArMKLT2-0311 (Conus arenatus (Sand-dusted cone)).